The primary structure comprises 1632 residues: Guanine exchange factor for Rac 30 (1632 aa).

Positions 16–122 (NIQIDSFTSW…VIFLLIQKIK (107 aa)) constitute a Calponin-homology (CH) domain. Disordered regions lie at residues 134-155 (QGET…TPTK) and 171-285 (FSHI…PTTG). Low complexity-rich tracts occupy residues 137-154 (TTGT…TTPT) and 180-284 (QSSS…SPTT). IQ domains follow at residues 388 to 417 (DLKK…KYKQ) and 432 to 461 (AYRG…LYRR). The DH domain occupies 460-638 (RRNEIVKEIL…KDVAEYVNEK (179 aa)). Positions 775 to 795 (QINNQNNNQNNNQNNNLNNNN) are enriched in low complexity. Residues 775-798 (QINNQNNNQNNNQNNNLNNNNDDS) are disordered. The PH 1 domain occupies 940–1038 (DSEFSNVLEK…WISLIRLSIK (99 aa)). Low complexity predominate over residues 1138-1156 (STSASQSQSQSPSPSPSHS). The segment at 1138 to 1161 (STSASQSQSQSPSPSPSHSINQKQ) is disordered. One can recognise an Arf-GAP domain in the interval 1271–1389 (NSCGDNINND…NNNNNNSQNG (119 aa)). The segment at 1286–1309 (CAECGASDPSWVSINYGVVVCLDC) adopts a C4-type zinc-finger fold. 3 stretches are compositionally biased toward low complexity: residues 1380 to 1402 (NNNN…TSTT), 1409 to 1431 (STPT…TTQT), and 1441 to 1481 (SSPT…TTPT). The segment at 1380-1521 (NNNNNNSQNG…SSHAITERKT (142 aa)) is disordered. The segment covering 1500–1515 (DTSNGKGTWSRGSSHA) has biased composition (polar residues). Residues 1532-1631 (KKEHQGYLFK…WLDVLSSHTT (100 aa)) form the PH 2 domain.

Its subcellular location is the membrane. The protein resides in the cytoplasmic vesicle. It localises to the phagosome membrane. Its function is as follows. GTPase-activating protein for Rac involved in streaming and development. The polypeptide is Guanine exchange factor for Rac 30 (gxcDD) (Dictyostelium discoideum (Social amoeba)).